The sequence spans 194 residues: Large ribosomal subunit protein uL18 (194 aa).

It belongs to the universal ribosomal protein uL18 family. As to quaternary structure, part of the 50S ribosomal subunit. Contacts the 5S and 23S rRNAs.

Its function is as follows. This is one of the proteins that bind and probably mediate the attachment of the 5S RNA into the large ribosomal subunit, where it forms part of the central protuberance. This Methanococcus aeolicus (strain ATCC BAA-1280 / DSM 17508 / OCM 812 / Nankai-3) protein is Large ribosomal subunit protein uL18.